A 54-amino-acid chain; its full sequence is Hemoglobin subunit omega (54 aa).

Residues 2 to 54 (HWTAEEKQIILAIWAKIDIEEAGAAALSRLLVVYPWTQRYFKNFGNLSSPTAI) form the Globin domain.

This sequence belongs to the globin family.

Functionally, hemoglobin omega chain is an embryonic-type beta-type chain found in prenatal and neonatal marsupials. The protein is Hemoglobin subunit omega of Notamacropus eugenii (Tammar wallaby).